The following is a 433-amino-acid chain: KICSTOR complex protein ITFG2 (433 aa).

The stretch at 19-48 is one FG-GAP 1; atypical repeat; it reads FPHAICLGDVDNDTLNELVVGDTSGKVSVY. A Phosphoserine modification is found at Ser104. Residues 126 to 155 form an FG-GAP 2; atypical repeat; sequence NTKVMLISDIDGDGCRELVVGYTDRVVRAF. Position 220 is a phosphoserine (Ser220).

As to quaternary structure, part of the KICSTOR complex composed of KPTN, ITFG2, KICS2 and SZT2. SZT2 probably serves as a link between the other three proteins in the KICSTOR complex and may mediate the direct interaction with the GATOR complex via GATOR1. The KICSTOR complex interacts directly with the GATOR1 complex and most probably indirectly with the GATOR2 complex in an amino acid-independent manner.

Its subcellular location is the lysosome membrane. Its function is as follows. As part of the KICSTOR complex functions in the amino acid-sensing branch of the TORC1 signaling pathway. Recruits, in an amino acid-independent manner, the GATOR1 complex to the lysosomal membranes and allows its interaction with GATOR2 and the RAG GTPases. Functions upstream of the RAG GTPases and is required to negatively regulate mTORC1 signaling in absence of amino acids. In absence of the KICSTOR complex mTORC1 is constitutively localized to the lysosome and activated. The KICSTOR complex is also probably involved in the regulation of mTORC1 by glucose. This is KICSTOR complex protein ITFG2 from Pongo abelii (Sumatran orangutan).